Here is a 362-residue protein sequence, read N- to C-terminus: MQLEIQVALNFIISYLYNKLPRRRVNIFGEELERLLKKKYEGHWYPEKPYKGSGFRCIHVGEKVDPVIEQASKESGLDIDDVRGNLPQDLSVWIDPFEVSYQIGEKGPVKVLYVDDSSETGCELDKEIKNSFNPEAQVFMPISDPASSVSSSPSPPFGHSAAVSPTFMPRSTQPLTFTTATFAATKFGSTKMKNSGRSSKVARTSPINLGLTVNVNDLLKQKAISSSVHSLYGLGLGSQQQPQPQPQQQQQQQPSSSQPPPPLPQQQQQQPQQQQQQQQQTSALSPNAKEFIFPNMQGQGSSTNGMFPGDSPLNLSPLQYSNAFDVFAAYGGLNEKSFVDGLNFSLNNMQYSNQQFQPVMAN.

The Bipartite nuclear localization signal signature appears at 22–39 (RRRVNIFGEELERLLKKK). Residues 82 to 92 (VRGNLPQDLSV) form an important for nuclear localization region. The span at 144-160 (DPASSVSSSPSPPFGHS) shows a compositional bias: low complexity. Residues 144 to 171 (DPASSVSSSPSPPFGHSAAVSPTFMPRS) form a disordered region. The required for interaction with CPEB3 stretch occupies residues 161-220 (AAVSPTFMPRSTQPLTFTTATFAATKFGSTKMKNSGRSSKVARTSPINLGLTVNVNDLLK). At Thr204 the chain carries Phosphothreonine. A Nuclear export signal motif is present at residues 228–236 (VHSLYGLGL). Positions 234-284 (LGLGSQQQPQPQPQQQQQQQPSSSQPPPPLPQQQQQQPQQQQQQQQQTSAL) are disordered. Composition is skewed to low complexity over residues 238–256 (SQQQPQPQPQQQQQQQPSS) and 265–280 (QQQQQQPQQQQQQQQQ).

Belongs to the BTG family. Interacts with ERBB2. Interacts with CNOT7. Interacts with CPEB3 (via C-terminal RNA-binding region); recruits CNOT7 to CPEB3 to form a ternary complex required for mRNA deadenylation and decay. Interacts with CNOT8. Interacts with CPEB4. Post-translationally, phosphorylated on Ser and Thr residues. In terms of tissue distribution, ubiquitous.

The protein localises to the cytoplasm. It is found in the nucleus. Anti-proliferative protein; the function is mediated by association with deadenylase subunits of the CCR4-NOT complex. Mediates CPEB3-accelerated mRNA deadenylation by binding to CPEB3 and recruiting CNOT7 which leads to target mRNA deadenylation and decay. This chain is Protein Tob1 (Tob1), found in Mus musculus (Mouse).